Here is an 86-residue protein sequence, read N- to C-terminus: ATP synthase subunit c (86 aa).

Helical transmembrane passes span 4 to 24 and 57 to 77; these read AIVA…GIGA and VAIA…LLFV.

This sequence belongs to the ATPase C chain family. In terms of assembly, F-type ATPases have 2 components, F(1) - the catalytic core - and F(0) - the membrane proton channel. F(1) has five subunits: alpha(3), beta(3), gamma(1), delta(1), epsilon(1). F(0) has three main subunits: a(1), b(2) and c(10-14). The alpha and beta chains form an alternating ring which encloses part of the gamma chain. F(1) is attached to F(0) by a central stalk formed by the gamma and epsilon chains, while a peripheral stalk is formed by the delta and b chains.

It localises to the cell membrane. Its function is as follows. F(1)F(0) ATP synthase produces ATP from ADP in the presence of a proton or sodium gradient. F-type ATPases consist of two structural domains, F(1) containing the extramembraneous catalytic core and F(0) containing the membrane proton channel, linked together by a central stalk and a peripheral stalk. During catalysis, ATP synthesis in the catalytic domain of F(1) is coupled via a rotary mechanism of the central stalk subunits to proton translocation. In terms of biological role, key component of the F(0) channel; it plays a direct role in translocation across the membrane. A homomeric c-ring of between 10-14 subunits forms the central stalk rotor element with the F(1) delta and epsilon subunits. The chain is ATP synthase subunit c from Clostridioides difficile (strain 630) (Peptoclostridium difficile).